The following is a 65-amino-acid chain: Large ribosomal subunit protein uL29 (65 aa).

It belongs to the universal ribosomal protein uL29 family.

This chain is Large ribosomal subunit protein uL29, found in Thioalkalivibrio sulfidiphilus (strain HL-EbGR7).